We begin with the raw amino-acid sequence, 447 residues long: uncharacterized protein (447 aa).

12 helical membrane-spanning segments follow: residues 17-37 (IMMM…SSSA), 40-60 (VAGP…LFIM), 95-115 (IYWK…AIFI), 118-138 (WLPG…VTIV), 154-174 (AMIK…LLFV), 200-220 (GLIT…IIGV), 243-263 (IVAF…WNQV), 289-311 (AVIL…RILY), 333-353 (MFAI…SLFA), 361-381 (LMGS…FAHL), 393-415 (YYVK…ILIG), and 419-441 (TTSI…AYLV).

Belongs to the amino acid-polyamine-organocation (APC) superfamily.

It localises to the cell membrane. May participate in leucine metabolism. May transport leucine or a compound related to leucine metabolism. This is an uncharacterized protein from Bacillus subtilis (strain 168).